The sequence spans 140 residues: Cysteine desulfuration protein SufE (140 aa).

Cys-51 serves as the catalytic Cysteine persulfide intermediate.

This sequence belongs to the SufE family. In terms of assembly, homodimer. Interacts with SufS.

The protein resides in the cytoplasm. It participates in cofactor biosynthesis; iron-sulfur cluster biosynthesis. Functionally, participates in cysteine desulfuration mediated by SufS. Cysteine desulfuration mobilizes sulfur from L-cysteine to yield L-alanine and constitutes an essential step in sulfur metabolism for biosynthesis of a variety of sulfur-containing biomolecules. Functions as a sulfur acceptor for SufS, by mediating the direct transfer of the sulfur atom from the S-sulfanylcysteine of SufS, an intermediate product of cysteine desulfuration process. The chain is Cysteine desulfuration protein SufE from Yersinia pestis bv. Antiqua (strain Antiqua).